The sequence spans 465 residues: VGFKAGVKDYKLTYYTPEYETKDTDILAAFRVTPQPGVPPEEAGAAVAAESSTGTWTTVWTDGLTSLDPYKGRCYHIEPVAGEESQFIAYVAYPLDLFEEGSVTNMFTSIVGNVFGFKALRALRLEDLRIPTAYVKTFQGPPHGIQVERDKLNKYGRPLLGCTIKPKLGLSAKNYGRAVYECLRGGLDFTKDDENVNSQPFMRWRDRFLFCAEAIYKSQAETGEIKGHYLNATAGTCEDMMKRAVFARELGVPIVMHDYLTGGFTANTTLAHYCRDNGLLLHIHRAMHAVIDRQKNHGMHFRVLAKALRMSGGDHIHAGTVVGKLEGEREITLGFVDLPRDDFIEKDRSRGIYFTQDWVSLPGVLPVASGGIHVWHMPALTEIFGDDSVLQFGGGTLGHPWGNAPGAVANRVALEACVQARNEGRDLAREGNEIIREASKWSPELAAACEVWKEIKFEFPAMDTL.

Position 4 is an N6,N6,N6-trimethyllysine (K4). Positions 113 and 163 each coordinate substrate. Residue K165 is the Proton acceptor of the active site. K167 is a binding site for substrate. Mg(2+) contacts are provided by K191, D193, and E194. An N6-carboxylysine modification is found at K191. H284 serves as the catalytic Proton acceptor. R285, H317, and S369 together coordinate substrate.

It belongs to the RuBisCO large chain family. Type I subfamily. As to quaternary structure, heterohexadecamer of 8 large chains and 8 small chains; disulfide-linked. The disulfide link is formed within the large subunit homodimers. Requires Mg(2+) as cofactor. In terms of processing, the disulfide bond which can form in the large chain dimeric partners within the hexadecamer appears to be associated with oxidative stress and protein turnover.

Its subcellular location is the plastid. The protein localises to the chloroplast. The enzyme catalyses 2 (2R)-3-phosphoglycerate + 2 H(+) = D-ribulose 1,5-bisphosphate + CO2 + H2O. It carries out the reaction D-ribulose 1,5-bisphosphate + O2 = 2-phosphoglycolate + (2R)-3-phosphoglycerate + 2 H(+). Functionally, ruBisCO catalyzes two reactions: the carboxylation of D-ribulose 1,5-bisphosphate, the primary event in carbon dioxide fixation, as well as the oxidative fragmentation of the pentose substrate in the photorespiration process. Both reactions occur simultaneously and in competition at the same active site. The sequence is that of Ribulose bisphosphate carboxylase large chain from Morella cerifera (Wax myrtle).